The primary structure comprises 377 residues: Glutamate 5-kinase (377 aa).

Residue Lys20 coordinates ATP. Substrate-binding residues include Ser60, Asp147, and Asn159. 179-180 (SD) is a binding site for ATP. The PUA domain maps to 281 to 355 (HGQLHLDAGA…GQSTSDLPEF (75 aa)).

This sequence belongs to the glutamate 5-kinase family.

The protein localises to the cytoplasm. It carries out the reaction L-glutamate + ATP = L-glutamyl 5-phosphate + ADP. It participates in amino-acid biosynthesis; L-proline biosynthesis; L-glutamate 5-semialdehyde from L-glutamate: step 1/2. Its function is as follows. Catalyzes the transfer of a phosphate group to glutamate to form L-glutamate 5-phosphate. The protein is Glutamate 5-kinase of Corynebacterium jeikeium (strain K411).